The primary structure comprises 86 residues: Small ribosomal subunit protein uS15 (86 aa).

Residues 1-22 form a disordered region; the sequence is MSIDTQKVIEDNKRSSADTGSP. Residues 7-16 are compositionally biased toward basic and acidic residues; the sequence is KVIEDNKRSS.

This sequence belongs to the universal ribosomal protein uS15 family. As to quaternary structure, part of the 30S ribosomal subunit. Forms a bridge to the 50S subunit in the 70S ribosome, contacting the 23S rRNA.

One of the primary rRNA binding proteins, it binds directly to 16S rRNA where it helps nucleate assembly of the platform of the 30S subunit by binding and bridging several RNA helices of the 16S rRNA. Functionally, forms an intersubunit bridge (bridge B4) with the 23S rRNA of the 50S subunit in the ribosome. This Stenotrophomonas maltophilia (strain R551-3) protein is Small ribosomal subunit protein uS15.